The following is a 796-amino-acid chain: Protein translocase subunit SecA 2 (796 aa).

ATP-binding positions include glutamine 84, 102–106 (GEGKT), and aspartate 496.

It belongs to the SecA family. Monomer and homodimer. Part of the essential Sec protein translocation apparatus which comprises SecA, SecYEG and auxiliary proteins SecDF. Other proteins may also be involved.

Its subcellular location is the cell membrane. It localises to the cytoplasm. The enzyme catalyses ATP + H2O + cellular proteinSide 1 = ADP + phosphate + cellular proteinSide 2.. Part of the Sec protein translocase complex. Interacts with the SecYEG preprotein conducting channel. Has a central role in coupling the hydrolysis of ATP to the transfer of proteins into and across the cell membrane, serving as an ATP-driven molecular motor driving the stepwise translocation of polypeptide chains across the membrane. The polypeptide is Protein translocase subunit SecA 2 (Staphylococcus aureus (strain MRSA252)).